Consider the following 76-residue polypeptide: MAEKKLTFEENLAQLEVIVNELETGDVPLEKAMTAFQEGVKLSQTLEETLSQAEKTMAKVMADNGEEVPLDAEEQQ.

This sequence belongs to the XseB family. In terms of assembly, heterooligomer composed of large and small subunits.

It localises to the cytoplasm. It catalyses the reaction Exonucleolytic cleavage in either 5'- to 3'- or 3'- to 5'-direction to yield nucleoside 5'-phosphates.. Bidirectionally degrades single-stranded DNA into large acid-insoluble oligonucleotides, which are then degraded further into small acid-soluble oligonucleotides. The polypeptide is Exodeoxyribonuclease 7 small subunit (Latilactobacillus sakei subsp. sakei (strain 23K) (Lactobacillus sakei subsp. sakei)).